A 514-amino-acid polypeptide reads, in one-letter code: 2,3-bisphosphoglycerate-independent phosphoglycerate mutase (514 aa).

The Mn(2+) site is built by Asp-14 and Ser-64. Ser-64 (phosphoserine intermediate) is an active-site residue. Residues His-125, 155–156 (RD), Arg-187, Arg-193, 263–266 (RADR), and Lys-336 each bind substrate. Mn(2+)-binding residues include Asp-403, His-407, Asp-444, His-445, and His-463.

It belongs to the BPG-independent phosphoglycerate mutase family. Monomer. It depends on Mn(2+) as a cofactor.

The enzyme catalyses (2R)-2-phosphoglycerate = (2R)-3-phosphoglycerate. It functions in the pathway carbohydrate degradation; glycolysis; pyruvate from D-glyceraldehyde 3-phosphate: step 3/5. In terms of biological role, catalyzes the interconversion of 2-phosphoglycerate and 3-phosphoglycerate. The sequence is that of 2,3-bisphosphoglycerate-independent phosphoglycerate mutase from Salmonella choleraesuis (strain SC-B67).